Reading from the N-terminus, the 410-residue chain is Transposase for insertion sequence element IS801 (410 aa).

The protein belongs to the transposase 32 family.

In terms of biological role, involved in the transposition of the insertion sequence. This chain is Transposase for insertion sequence element IS801, found in Pseudomonas savastanoi pv. phaseolicola (Pseudomonas syringae pv. phaseolicola).